The chain runs to 420 residues: UDP-N-acetylglucosamine 1-carboxyvinyltransferase (420 aa).

22 to 23 serves as a coordination point for phosphoenolpyruvate; sequence KN. Arginine 92 is a UDP-N-acetyl-alpha-D-glucosamine binding site. Cysteine 116 functions as the Proton donor in the catalytic mechanism. Cysteine 116 is subject to 2-(S-cysteinyl)pyruvic acid O-phosphothioketal. UDP-N-acetyl-alpha-D-glucosamine contacts are provided by residues 121 to 125, 161 to 164, aspartate 306, and isoleucine 328; these read RPVDL and KVSV.

It belongs to the EPSP synthase family. MurA subfamily.

The protein localises to the cytoplasm. The catalysed reaction is phosphoenolpyruvate + UDP-N-acetyl-alpha-D-glucosamine = UDP-N-acetyl-3-O-(1-carboxyvinyl)-alpha-D-glucosamine + phosphate. The protein operates within cell wall biogenesis; peptidoglycan biosynthesis. Its function is as follows. Cell wall formation. Adds enolpyruvyl to UDP-N-acetylglucosamine. This Yersinia pseudotuberculosis serotype O:1b (strain IP 31758) protein is UDP-N-acetylglucosamine 1-carboxyvinyltransferase.